Here is a 518-residue protein sequence, read N- to C-terminus: Putative succinate-semialdehyde dehydrogenase [NADP(+)] 2 (518 aa).

NADP(+) contacts are provided by residues 157–158 (WN), 181–184 (KPDS), and 232–233 (GS). Residue glutamate 254 is the Proton acceptor of the active site. Residue leucine 255 participates in NADP(+) binding. Residue cysteine 288 is the Nucleophile of the active site. Glutamate 386 contributes to the NADP(+) binding site.

The protein belongs to the aldehyde dehydrogenase family.

It catalyses the reaction succinate semialdehyde + NADP(+) + H2O = succinate + NADPH + 2 H(+). Functionally, catalyzes the NADP(+)-dependent oxidation of succinate semialdehyde to succinate. Although it has succinate semialdehyde dehydrogenase activity, is likely to act physiologically on a different aldehyde(s). The chain is Putative succinate-semialdehyde dehydrogenase [NADP(+)] 2 (gabD2) from Mycobacterium ulcerans (strain Agy99).